The sequence spans 319 residues: Cell division protein PomZ (319 aa).

61–68 (KGGTGKTS) provides a ligand contact to ATP.

It belongs to the ParA family. In terms of assembly, interacts with FtsZ in pull-down experiments.

It is found in the cytoplasm. Functionally, spatial regulator of cell division that is involved in identifying the incipient division site, recruiting FtsZ to the division site and stabilizing the Z-ring. Binds ATP and GTP. The polypeptide is Cell division protein PomZ (Myxococcus xanthus (strain DK1622)).